A 77-amino-acid chain; its full sequence is U8-lycotoxin-Ls1i (77 aa).

The first 20 residues, 1–20 (MKLIIFTGLVLFAIVSLIEV), serve as a signal peptide directing secretion. Positions 21–26 (QADNER) are excised as a propeptide.

It belongs to the neurotoxin 19 (CSTX) family. 08 (U8-Lctx) subfamily. In terms of processing, contains 4 disulfide bonds. Expressed by the venom gland.

It is found in the secreted. The protein is U8-lycotoxin-Ls1i of Lycosa singoriensis (Wolf spider).